The following is a 132-amino-acid chain: Small ribosomal subunit protein uS8 (132 aa).

This sequence belongs to the universal ribosomal protein uS8 family. As to quaternary structure, part of the 30S ribosomal subunit. Contacts proteins S5 and S12.

One of the primary rRNA binding proteins, it binds directly to 16S rRNA central domain where it helps coordinate assembly of the platform of the 30S subunit. In Halalkalibacterium halodurans (strain ATCC BAA-125 / DSM 18197 / FERM 7344 / JCM 9153 / C-125) (Bacillus halodurans), this protein is Small ribosomal subunit protein uS8.